The primary structure comprises 277 residues: Putative thiosulfate sulfurtransferase (277 aa).

Rhodanese domains follow at residues 18–125 (KAPK…PLSA) and 154–274 (AIGT…APIE). An Isoglutamyl lysine isopeptide (Lys-Gln) (interchain with Q-Cter in protein Pup) cross-link involves residue Lys67. The Cysteine persulfide intermediate role is filled by Cys233. Arg238 lines the substrate pocket.

The catalysed reaction is thiosulfate + hydrogen cyanide = thiocyanate + sulfite + 2 H(+). Functionally, may be a sulfotransferase involved in the formation of thiosulfate. The polypeptide is Putative thiosulfate sulfurtransferase (Mycolicibacterium smegmatis (strain ATCC 700084 / mc(2)155) (Mycobacterium smegmatis)).